Reading from the N-terminus, the 146-residue chain is ATP synthase F(0) complex subunit C2, mitochondrial (146 aa).

The transit peptide at 1 to 71 (MYACSKFVST…RSFQTSAISR (71 aa)) directs the protein to the mitochondrion. Residues 87-107 (VGVAGSGAGIGTVFGSLIIGY) traverse the membrane as a helical segment. Lysine 114 carries the post-translational modification N6,N6,N6-trimethyllysine. A helical transmembrane segment spans residues 122–142 (ILGFALSEAMGLFCLMVAFLI).

The protein belongs to the ATPase C chain family. In terms of assembly, F-type ATPases have 2 components, CF(1) - the catalytic core - and CF(0) - the membrane proton channel. CF(1) has five subunits: alpha(3), beta(3), gamma(1), delta(1), epsilon(1). CF(0) has three main subunits: a, b and c. Interacts with DNAJC30; interaction is direct. Trimethylated by ATPSCKMT at Lys-114. Methylation is required for proper incorporation of the C subunit into the ATP synthase complex and mitochondrial respiration.

It is found in the mitochondrion membrane. Its function is as follows. Mitochondrial membrane ATP synthase (F(1)F(0) ATP synthase or Complex V) produces ATP from ADP in the presence of a proton gradient across the membrane which is generated by electron transport complexes of the respiratory chain. F-type ATPases consist of two structural domains, F(1) - containing the extramembraneous catalytic core and F(0) - containing the membrane proton channel, linked together by a central stalk and a peripheral stalk. During catalysis, ATP synthesis in the catalytic domain of F(1) is coupled via a rotary mechanism of the central stalk subunits to proton translocation. Part of the complex F(0) domain. A homomeric c-ring of probably 10 subunits is part of the complex rotary element. The chain is ATP synthase F(0) complex subunit C2, mitochondrial from Mus musculus (Mouse).